Here is a 286-residue protein sequence, read N- to C-terminus: Bifunctional protein FolD (286 aa).

NADP(+)-binding positions include 160 to 162, serine 189, and threonine 230; that span reads GRS.

It belongs to the tetrahydrofolate dehydrogenase/cyclohydrolase family. As to quaternary structure, homodimer.

The catalysed reaction is (6R)-5,10-methylene-5,6,7,8-tetrahydrofolate + NADP(+) = (6R)-5,10-methenyltetrahydrofolate + NADPH. The enzyme catalyses (6R)-5,10-methenyltetrahydrofolate + H2O = (6R)-10-formyltetrahydrofolate + H(+). It functions in the pathway one-carbon metabolism; tetrahydrofolate interconversion. Its function is as follows. Catalyzes the oxidation of 5,10-methylenetetrahydrofolate to 5,10-methenyltetrahydrofolate and then the hydrolysis of 5,10-methenyltetrahydrofolate to 10-formyltetrahydrofolate. The protein is Bifunctional protein FolD of Chlamydia pneumoniae (Chlamydophila pneumoniae).